The following is a 318-amino-acid chain: tRNA uridine(34) hydroxylase (318 aa).

One can recognise a Rhodanese domain in the interval 123–217 (EDDDTVIIDA…YGKDPETKGE (95 aa)). Cys-177 functions as the Cysteine persulfide intermediate in the catalytic mechanism.

Belongs to the TrhO family.

The catalysed reaction is uridine(34) in tRNA + AH2 + O2 = 5-hydroxyuridine(34) in tRNA + A + H2O. In terms of biological role, catalyzes oxygen-dependent 5-hydroxyuridine (ho5U) modification at position 34 in tRNAs. The chain is tRNA uridine(34) hydroxylase from Staphylococcus aureus (strain USA300).